The chain runs to 253 residues: MKTQWGEVWTHLLLLLLGFLHVSWAQSSCTGPPGIPGIPGVPGVPGSDGQPGTPGIKGEKGLPGLAGDLGEFGEKGDPGIPGTPGKVGPKGPVGPKGTPGPSGPRGPKGDSGDYGATQKVAFSALRTINSPLRPNQVIRFEKVITNANENYEPRNGKFTCKVPGLYYFTYHASSRGNLCVNLVRGRDRDSMQKVVTFCDYAQNTFQVTTGGVVLKLEQEEVVHLQATDKNSLLGIEGANSIFTGFLLFPDMDA.

Positions 1-25 (MKTQWGEVWTHLLLLLLGFLHVSWA) are cleaved as a signal peptide. Residue Q26 is modified to Pyrrolidone carboxylic acid. Residues 29–112 (CTGPPGIPGI…GPRGPKGDSG (84 aa)) form the Collagen-like domain. 4-hydroxyproline occurs at positions 33, 36, 39, 51, and 54. Residues 35 to 115 (IPGIPGVPGV…GPKGDSGDYG (81 aa)) are disordered. K57 and K60 each carry 5-hydroxylysine. P63 is modified (4-hydroxyproline). K75 carries the 5-hydroxylysine modification. The segment covering 78-96 (PGIPGTPGKVGPKGPVGPK) has biased composition (low complexity). 2 positions are modified to 4-hydroxyproline: P81 and P84. 5-hydroxylysine is present on residues K90 and K96. P99 is modified (4-hydroxyproline). The residue at position 108 (K108) is a 5-hydroxylysine. One can recognise a C1q domain in the interval 115 to 253 (GATQKVAFSA…GFLLFPDMDA (139 aa)). C179 and C198 are joined by a disulfide. Ca(2+)-binding residues include D199, Y200, and Q206.

As to quaternary structure, core component of the complement C1 complex, a calcium-dependent complex composed of 1 molecule of the C1Q subcomplex, 2 molecules of C1R and 2 molecules of C1S. The C1Q subcomplex is composed 18 subunits: 3 chains of C1QA, C1QB, and C1QC trimerize to form 6 collagen-like triple helices connected to six globular ligand-recognition modules (C1q domain). In terms of processing, hydroxylated on lysine and proline residues. Hydroxylated lysine residues can be glycosylated. Mouse C1Q contains up to 64.0 hydroxylysine-galactosylglucose residues. Total percentage hydroxylysine residues glycosylated is 95.1%. Contains no hydroxylysine-monosaccharides. In terms of tissue distribution, highest expression in thioglycolate-activated peritoneal macrophages. Also found in spleen, thymus and heart. Very weak expression liver, kidney, lung and intestine.

It is found in the secreted. Its subcellular location is the cell surface. The C1Q subcomplex is inhibited by sulfated molecules, such as triterpenoid sulfates, heparan sulfate, or chondroitin sulfates. Its function is as follows. Core component of the complement C1 complex, a multiprotein complex that initiates the classical pathway of the complement system, a cascade of proteins that leads to phagocytosis and breakdown of pathogens and signaling that strengthens the adaptive immune system. The classical complement pathway is initiated by the C1Q subcomplex of the C1 complex, which specifically binds IgG or IgM immunoglobulins complexed with antigens, forming antigen-antibody complexes on the surface of pathogens: C1QA, together with C1QB and C1QC, specifically recognizes and binds the Fc regions of IgG or IgM via its C1q domain. Immunoglobulin-binding activates the proenzyme C1R, which cleaves C1S, initiating the proteolytic cascade of the complement system. The C1Q subcomplex is activated by a hexamer of IgG complexed with antigens, while it is activated by a pentameric IgM. The C1Q subcomplex also recognizes and binds phosphatidylserine exposed on the surface of cells undergoing programmed cell death, possibly promoting activation of the complement system. This Mus musculus (Mouse) protein is Complement C1q subcomponent subunit B.